Here is a 563-residue protein sequence, read N- to C-terminus: Pentatricopeptide repeat-containing protein At4g39620, chloroplastic (563 aa).

The transit peptide at M1–T47 directs the protein to the chloroplast. 9 PPR repeats span residues D132 to P166, D167 to K197, N207 to P241, D242 to P276, D277 to P311, T312 to P346, S347 to L381, K382 to P416, and D417 to P451. Disordered regions lie at residues P468 to K501 and N520 to M551. The span at N520–Q537 shows a compositional bias: basic and acidic residues.

It belongs to the PPR family. P subfamily.

It localises to the plastid. The protein localises to the chloroplast. Functionally, essential for embryo development. The sequence is that of Pentatricopeptide repeat-containing protein At4g39620, chloroplastic from Arabidopsis thaliana (Mouse-ear cress).